Here is a 312-residue protein sequence, read N- to C-terminus: Iron/alpha-ketoglutarate-dependent dioxygenase penM (312 aa).

His-134, Asp-136, and His-211 together coordinate Fe cation. The interval 287–312 is disordered; sequence LGLKSEQPLPDGMEKGSMQETDIGGQ.

It belongs to the PhyH family. Homodimer. Requires Fe cation as cofactor.

It carries out the reaction (-)-cyclopeptine + 2-oxoglutarate + O2 = (Z)-dehydrocyclopeptine + succinate + CO2 + H2O. The catalysed reaction is (Z)-dehydrocyclopeptine + 2-oxoglutarate + O2 = (-)-cyclopenine + succinate + CO2. The enzyme catalyses (-)-4'-methoxycyclopeptine + 2-oxoglutarate + O2 = (Z)-4'-methoxydehydrocyclopeptine + succinate + CO2 + H2O. It catalyses the reaction (Z)-4'-methoxydehydrocyclopeptine + 2-oxoglutarate + O2 = (-)-4'-methoxycyclopenine + succinate + CO2. It functions in the pathway secondary metabolite biosynthesis. The protein operates within alkaloid biosynthesis. Its pathway is mycotoxin biosynthesis. Functionally, iron/alpha-ketoglutarate-dependent dioxygenase; part of the gene cluster that mediates the biosynthesis of penigequinolones, potent insecticidal alkaloids that contain a highly modified 10-carbon prenyl group. The first stage is catalyzed by the nonribosomal peptide synthetase penN that condenses anthranilic acid and O-methyl-L-tyrosine to produce 4'-methoxycyclopeptin. 4'-methoxycyclopeptin is then converted to 4'-methoxydehydrocyclopeptin by the ketoglutarate-dependent dioxygenase penM through dehydrogenation to form a double bond between C-alpha and C-beta of the O-methyltyrosine side chain. PenM also converts its first product methoxydehydrocyclopeptin to 4'-methoxycyclopenin. The following conversion of 4'methoxycyclopenin into 4'-methoxyviridicatin is catalyzed by the cyclopenase penL. 4'-methoxyviridicatin is the precursor of quinolone natural products, and is further converted to quinolinone B. The prenyltransferase penI then catalyzes the canonical Friedel-Crafts alkylation of quinolinone B with dimethylallyl cation to yield dimethylallyl quinolone, which is subjected to FAD-dependent dehydrogenation by the FAD-linked oxidoreductase penH to yield conjugated aryl diene. The delta(3') double bond then serves as the site of the second alkylation with DMAPP catalyzed by the prenyltransferase penG to yield a carbenium ion intermediate, which can be attacked by H(2)O to yield a styrenyl quinolone containing a C3'-hydroxyprenyl chain, or undergo cyclization to yield yaequinolones J1 and J2. The conversion of the styrenyl quinolone into the tetrahydrofuran-containing yaequinolone C is performed by the FAD-dependent monooxygenase penE and involves epoxidation of the terminal C7'-C8' olefin, followed by epoxide ring opening initiated by the C3' hydroxyl group. The predicted cysteine hydrolase penJ acts as an epoxide hydrolase that enhances the rate of the 5-exo-tet cyclization step, increasing the yield of yaequinolone C. PenF catalyzes the cationic rearrangement of the epoxide formed by penE (before ring opening to produce yaequinolone C) into yaequinolone D. Finally, the short-chain dehydrogenase/reductase (SDR)-like reductase penD, catalyzes both the dehydration of yaequinolone D and the reduction of the resulting oxonium to yield penigequinolone. This Penicillium thymicola protein is Iron/alpha-ketoglutarate-dependent dioxygenase penM.